A 292-amino-acid chain; its full sequence is Protease HtpX (292 aa).

A run of 2 helical transmembrane segments spans residues 4–24 (IVLF…ILFL) and 32–52 (IYGL…LSLI). Histidine 139 provides a ligand contact to Zn(2+). Glutamate 140 is a catalytic residue. Histidine 143 lines the Zn(2+) pocket. The next 2 helical transmembrane spans lie at 147-167 (GDMI…IFIS) and 193-213 (FVYF…ASII). Glutamate 222 lines the Zn(2+) pocket.

The protein belongs to the peptidase M48B family. It depends on Zn(2+) as a cofactor.

Its subcellular location is the cell membrane. This is Protease HtpX from Buchnera aphidicola subsp. Acyrthosiphon pisum (strain 5A).